The sequence spans 347 residues: 4-hydroxy-2-oxovalerate aldolase 2 (347 aa).

Positions 9-259 (ITIVDTTLRD…DTGVDLFPLI (251 aa)) constitute a Pyruvate carboxyltransferase domain. Substrate-binding positions include 17 to 18 (RD), serine 171, and histidine 198. Position 18 (aspartate 18) interacts with Mn(2+). Mn(2+) is bound by residues histidine 198 and histidine 200. Position 289 (tyrosine 289) interacts with substrate.

It belongs to the 4-hydroxy-2-oxovalerate aldolase family.

It catalyses the reaction (S)-4-hydroxy-2-oxopentanoate = acetaldehyde + pyruvate. This is 4-hydroxy-2-oxovalerate aldolase 2 from Rhodococcus opacus (strain B4).